The chain runs to 226 residues: Endonuclease V (226 aa).

2 residues coordinate Mg(2+): D42 and D110.

Belongs to the endonuclease V family. Mg(2+) is required as a cofactor.

It is found in the cytoplasm. The enzyme catalyses Endonucleolytic cleavage at apurinic or apyrimidinic sites to products with a 5'-phosphate.. DNA repair enzyme involved in the repair of deaminated bases. Selectively cleaves double-stranded DNA at the second phosphodiester bond 3' to a deoxyinosine leaving behind the intact lesion on the nicked DNA. This chain is Endonuclease V, found in Thermus thermophilus (strain ATCC BAA-163 / DSM 7039 / HB27).